The following is a 92-amino-acid chain: Small ribosomal subunit protein uS19c (92 aa).

Belongs to the universal ribosomal protein uS19 family.

It localises to the plastid. The protein resides in the chloroplast. Functionally, protein S19 forms a complex with S13 that binds strongly to the 16S ribosomal RNA. The chain is Small ribosomal subunit protein uS19c from Adiantum capillus-veneris (Maidenhair fern).